The primary structure comprises 175 residues: NAD(P)H-quinone oxidoreductase subunit I, chloroplastic (175 aa).

2 consecutive 4Fe-4S ferredoxin-type domains span residues 55–84 (GRIHFEFDKCIACEVCVRVCPINLPVVNWE) and 95–124 (QTYSIDFGVCIFCGNCVEYCPTNCLSMTEE). [4Fe-4S] cluster is bound by residues Cys-64, Cys-67, Cys-70, Cys-74, Cys-104, Cys-107, Cys-110, and Cys-114.

Belongs to the complex I 23 kDa subunit family. NDH is composed of at least 16 different subunits, 5 of which are encoded in the nucleus. Requires [4Fe-4S] cluster as cofactor.

The protein resides in the plastid. The protein localises to the chloroplast thylakoid membrane. It carries out the reaction a plastoquinone + NADH + (n+1) H(+)(in) = a plastoquinol + NAD(+) + n H(+)(out). The enzyme catalyses a plastoquinone + NADPH + (n+1) H(+)(in) = a plastoquinol + NADP(+) + n H(+)(out). In terms of biological role, NDH shuttles electrons from NAD(P)H:plastoquinone, via FMN and iron-sulfur (Fe-S) centers, to quinones in the photosynthetic chain and possibly in a chloroplast respiratory chain. The immediate electron acceptor for the enzyme in this species is believed to be plastoquinone. Couples the redox reaction to proton translocation, and thus conserves the redox energy in a proton gradient. This is NAD(P)H-quinone oxidoreductase subunit I, chloroplastic from Chlorokybus atmophyticus (Soil alga).